Reading from the N-terminus, the 90-residue chain is MLKKQFIVYGLVQGVGFRYFTWKTAMQIGVKGYVRNRDDGSVEVVAVGSTTQLAQLHTWLTQGPRTASVEQVIEQEYADSREFTDFSVRY.

In terms of domain architecture, Acylphosphatase-like spans 3–90 (KKQFIVYGLV…REFTDFSVRY (88 aa)). Active-site residues include Arg18 and Asn36.

Belongs to the acylphosphatase family.

The enzyme catalyses an acyl phosphate + H2O = a carboxylate + phosphate + H(+). This chain is Acylphosphatase (acyP), found in Pasteurella multocida (strain Pm70).